The following is a 164-amino-acid chain: 3-isopropylmalate dehydratase small subunit (164 aa).

The protein belongs to the LeuD family. LeuD type 2 subfamily. As to quaternary structure, heterodimer of LeuC and LeuD.

It catalyses the reaction (2R,3S)-3-isopropylmalate = (2S)-2-isopropylmalate. It participates in amino-acid biosynthesis; L-leucine biosynthesis; L-leucine from 3-methyl-2-oxobutanoate: step 2/4. Its function is as follows. Catalyzes the isomerization between 2-isopropylmalate and 3-isopropylmalate, via the formation of 2-isopropylmaleate. The sequence is that of 3-isopropylmalate dehydratase small subunit from Lachnospira eligens (strain ATCC 27750 / DSM 3376 / VPI C15-48 / C15-B4) (Eubacterium eligens).